The chain runs to 343 residues: Aspartate-semialdehyde dehydrogenase (343 aa).

NADP(+)-binding positions include 13–16 (TGAV) and 41–42 (KS). Arginine 103 provides a ligand contact to phosphate. Cysteine 134 acts as the Acyl-thioester intermediate in catalysis. Residue glutamine 161 participates in substrate binding. Residue 164–165 (SG) coordinates NADP(+). Lysine 220 is a phosphate binding site. Arginine 241 is a binding site for substrate. Histidine 248 serves as the catalytic Proton acceptor. Residue glutamine 321 coordinates NADP(+).

The protein belongs to the aspartate-semialdehyde dehydrogenase family. Homodimer.

It catalyses the reaction L-aspartate 4-semialdehyde + phosphate + NADP(+) = 4-phospho-L-aspartate + NADPH + H(+). Its pathway is amino-acid biosynthesis; L-lysine biosynthesis via DAP pathway; (S)-tetrahydrodipicolinate from L-aspartate: step 2/4. It functions in the pathway amino-acid biosynthesis; L-methionine biosynthesis via de novo pathway; L-homoserine from L-aspartate: step 2/3. It participates in amino-acid biosynthesis; L-threonine biosynthesis; L-threonine from L-aspartate: step 2/5. Functionally, catalyzes the NADPH-dependent formation of L-aspartate-semialdehyde (L-ASA) by the reductive dephosphorylation of L-aspartyl-4-phosphate. The chain is Aspartate-semialdehyde dehydrogenase from Campylobacter jejuni subsp. jejuni serotype O:2 (strain ATCC 700819 / NCTC 11168).